A 922-amino-acid polypeptide reads, in one-letter code: Golgi-associated RAB2 interactor protein 5B (922 aa).

Disordered stretches follow at residues 244-264 (DVRK…DRTH), 292-317 (QSSP…SPSH), 373-404 (TPYS…KAPS), 424-597 (AVPA…TQET), 758-830 (QPES…LRPS), and 842-869 (ATAR…LATV). A compositionally biased stretch (polar residues) spans 292–305 (QSSPKACTSASDEA). Positions 431–441 (KPPPGLAPPQK) are enriched in pro residues. 2 stretches are compositionally biased toward low complexity: residues 442 to 458 (APAA…VPAP) and 471 to 495 (KAPA…ASAV). Positions 496–507 (PAPPQKTPPPSQ) are enriched in pro residues. Over residues 758 to 788 (QPESHTWVKEGKRPWGEMKEQPWGEMKEPPW) the composition is skewed to basic and acidic residues.

Belongs to the GARIN family.

This Homo sapiens (Human) protein is Golgi-associated RAB2 interactor protein 5B.